A 145-amino-acid polypeptide reads, in one-letter code: Transcription antitermination protein NusB (145 aa).

Belongs to the NusB family.

In terms of biological role, involved in transcription antitermination. Required for transcription of ribosomal RNA (rRNA) genes. Binds specifically to the boxA antiterminator sequence of the ribosomal RNA (rrn) operons. This Thiobacillus denitrificans (strain ATCC 25259 / T1) protein is Transcription antitermination protein NusB.